Consider the following 1368-residue polypeptide: METQLQSIFEEVVKTEVIEEAFPGMFMDTPEDEKTKLISCLGAFRQFWGGLSQESHEQCIQWIVKFIHGQHSPKRISFLYDCLAMAVETGLLPPRLVCESLINSDTLEWERTQLWALTFKLVRKIIGGVDYKGVRDLLKVILEKILTIPNTVSSAVVQQLLAAREVIAYILERNACLLPAYFAVTEIRKLYPEGKLPHWLLGNLVSDFVDTFRPTARINSICGRCSLLPVVNNSGAICNSWKLDPATLRFPLKGLLPYDKDLFEPQTALLRYVLEQPYSRDMVCNMLGLNKQHKQRCPVLEDQLVDLVVYAMERSETEEKFDDGGTSQLLWQHLSSQLIFFVLFQFASFPHMVLSLHQKLAGRGLIKGRDHLMWVLLQFISGSIQKNALADFLPVMKLFDLLYPEKEYIPVPDINKPQSTHAFAMTCIWIHLNRKAQNDNSKLQIPIPHSLRLHHEFLQQSLRNKSLQMNDYKIALLCNAYSTNSECFTLPMGALVETIYGNGIMRIPLPGTNCMASGSITPLPMNLLDSLTVHAKMSLIHSIATRVIKLAHAKSSVALAPALVETYSRLLVYMEIESLGIKGFISQLLPTVFKSHAWGILHTLLEMFSYRMHHIQPHYRVQLLSHLHTLAAVAQTNQNQLHLCVESTALRLITALGSSEVQPQFTRFLSDPKTVLSAESEELNRALILTLARATHVTDFFTGSDSIQGTWCKDILQTIMSFTPHNWASHTLSCFPGPLQAFFKQNNVPQESRFNLKKNVEEEYRKWKSMSNENDIITHFSMQGSPPLFLCLLWKMLLETDHINQIGYRVLERIGARALVAHVRTFADFLVYEFSTSAGGQQLNKCIEILNDMVWKYNIVTLDRLILCLAMRSHEGNEAQVCYFIIQLLLLKPNDFRNRVSDFVKENSPEHWLQNDWHTKHMNYHKKYPEKLYFEGLAEQVDPPVQIQSPYLPIYFGNVCLRFLPVFDIVIHRFLELLPVSKSLETLLDHLGGLYKFHDRPVTYLYNTLHYYEMHLRDRAFLKRKLVHAIIGSLKDNRPQGWCLSDTYLKCAMNAREENPWVPDDTYYCRLIGRLVDTMAGKSPGPFPNCDWRFNEFPNPAAHALHVTCVELMALAVSGKEVGNALLNVVLKSQPLVPRENITAWMNAIGLIITALPEPYWIVLHDRIVSVISSPSLTSETEWVGYPFRLFDFTACHQSYSEMSCSYTLALAHAVWHHSSIGQLSLIPKFLTEVLLPIVKTEFQLLYVYHLVGPFLQRFQQERTRCMIEIGVAFYDMLLNVDQCSTHLNYMDPICDFLYHMKYMFTGDSVKEQVEKIICNLKPALKLRLRFITHISKMEPAAVPPQAMNSGSPAPQSNQVPVSLPVTQ.

Positions valine 1343–glutamine 1368 are disordered. Polar residues predominate over residues alanine 1347–glutamine 1368.

Belongs to the Mediator complex subunit 23 family. In terms of assembly, interacts with ELK1. Component of the Mediator complex, which is composed of MED1, MED4, MED6, MED7, MED8, MED9, MED10, MED11, MED12, MED13, MED13L, MED14, MED15, MED16, MED17, MED18, MED19, MED20, MED21, MED22, MED23, MED24, MED25, MED26, MED27, MED29, MED30, MED31, CCNC, CDK8 and CDC2L6/CDK11. The MED12, MED13, CCNC and CDK8 subunits form a distinct module termed the CDK8 module. Mediator containing the CDK8 module is less active than Mediator lacking this module in supporting transcriptional activation. Individual preparations of the Mediator complex lacking one or more distinct subunits have been variously termed ARC, CRSP, DRIP, PC2, SMCC and TRAP. Interacts with CEBPB (when not methylated), CTNNB1, and GLI3. Interacts with the adenovirus E1A protein.

It localises to the nucleus. In terms of biological role, required for transcriptional activation subsequent to the assembly of the pre-initiation complex. Component of the Mediator complex, a coactivator involved in the regulated transcription of nearly all RNA polymerase II-dependent genes. Mediator functions as a bridge to convey information from gene-specific regulatory proteins to the basal RNA polymerase II transcription machinery. Mediator is recruited to promoters by direct interactions with regulatory proteins and serves as a scaffold for the assembly of a functional pre-initiation complex with RNA polymerase II and the general transcription factors. Required for transcriptional activation by adenovirus E1A protein. Required for ELK1-dependent transcriptional activation in response to activated Ras signaling. The sequence is that of Mediator of RNA polymerase II transcription subunit 23 (MED23) from Homo sapiens (Human).